Reading from the N-terminus, the 113-residue chain is Cell wall protein PGA59 (113 aa).

Residues 1–18 (MQFSSAIILSAVAGSALA) form the signal peptide. N-linked (GlcNAc...) asparagine glycosylation is found at N22 and N80. G92 carries GPI-anchor amidated glycine lipidation. A propeptide spans 93 to 113 (AAAANAVPAVAAGLLALGAFM) (removed in mature form).

The protein belongs to the HWP1 family. Post-translationally, N- and O-glycosylated. In terms of processing, the GPI-anchor is attached to the protein in the endoplasmic reticulum and serves to target the protein to the cell surface. There, the glucosamine-inositol phospholipid moiety is cleaved off and the GPI-modified mannoprotein is covalently attached via its lipidless GPI glycan remnant to the 1,6-beta-glucan of the outer cell wall layer.

Its subcellular location is the secreted. It is found in the cell wall. The protein localises to the membrane. Cell wall protein necessary for cell wall integrity. Plays only a minor role in hyphal morphogenesis and is not critical to biofilm formation. In Candida albicans (strain SC5314 / ATCC MYA-2876) (Yeast), this protein is Cell wall protein PGA59 (PGA59).